Reading from the N-terminus, the 123-residue chain is UPF0102 protein Cbei_1183 (123 aa).

The protein belongs to the UPF0102 family.

The sequence is that of UPF0102 protein Cbei_1183 from Clostridium beijerinckii (strain ATCC 51743 / NCIMB 8052) (Clostridium acetobutylicum).